Reading from the N-terminus, the 522-residue chain is Response regulator mcs4 (522 aa).

A disordered region spans residues 148–274 (DSLESPVSAP…RSISHSSLYT (127 aa)). Over residues 174–194 (NLRNASRTRSHQTLPSSNVNK) the composition is skewed to polar residues. Basic and acidic residues predominate over residues 244–255 (RSDESTAEKLAK). A compositionally biased stretch (polar residues) spans 260–274 (TPTNSRSISHSSLYT). Positions 363–505 (NVLIVEDNII…WLEKKITEWG (143 aa)) constitute a Response regulatory domain. Aspartate 412 bears the 4-aspartylphosphate mark.

Its subcellular location is the cytoplasm. Its function is as follows. Response regulator that coordinately controls the stress activated wak1-wis1-sty1 MAP kinase pathway and fission yeast cell cycle. This chain is Response regulator mcs4 (mcs4), found in Schizosaccharomyces pombe (strain 972 / ATCC 24843) (Fission yeast).